Here is a 115-residue protein sequence, read N- to C-terminus: Holo-[acyl-carrier-protein] synthase (115 aa).

Residues aspartate 5 and glutamate 50 each contribute to the Mg(2+) site.

This sequence belongs to the P-Pant transferase superfamily. AcpS family. Requires Mg(2+) as cofactor.

Its subcellular location is the cytoplasm. It carries out the reaction apo-[ACP] + CoA = holo-[ACP] + adenosine 3',5'-bisphosphate + H(+). Its function is as follows. Transfers the 4'-phosphopantetheine moiety from coenzyme A to a Ser of acyl-carrier-protein. The polypeptide is Holo-[acyl-carrier-protein] synthase (Campylobacter fetus subsp. fetus (strain 82-40)).